Here is a 509-residue protein sequence, read N- to C-terminus: Maturase K (509 aa).

The protein belongs to the intron maturase 2 family. MatK subfamily.

The protein resides in the plastid. It localises to the chloroplast. Usually encoded in the trnK tRNA gene intron. Probably assists in splicing its own and other chloroplast group II introns. The sequence is that of Maturase K from Citrus sinensis (Sweet orange).